Here is a 323-residue protein sequence, read N- to C-terminus: Beta-ketoacyl-[acyl-carrier-protein] synthase III (323 aa).

Active-site residues include Cys113 and His250. Positions 251–255 (QANKR) are ACP-binding. Asn280 is an active-site residue.

The protein belongs to the thiolase-like superfamily. FabH family. In terms of assembly, homodimer.

It is found in the cytoplasm. The catalysed reaction is malonyl-[ACP] + acetyl-CoA + H(+) = 3-oxobutanoyl-[ACP] + CO2 + CoA. It functions in the pathway lipid metabolism; fatty acid biosynthesis. In terms of biological role, catalyzes the condensation reaction of fatty acid synthesis by the addition to an acyl acceptor of two carbons from malonyl-ACP. Catalyzes the first condensation reaction which initiates fatty acid synthesis and may therefore play a role in governing the total rate of fatty acid production. Possesses both acetoacetyl-ACP synthase and acetyl transacylase activities. Its substrate specificity determines the biosynthesis of branched-chain and/or straight-chain of fatty acids. The protein is Beta-ketoacyl-[acyl-carrier-protein] synthase III of Brucella abortus biovar 1 (strain 9-941).